A 230-amino-acid chain; its full sequence is Ribonuclease HII (230 aa).

In terms of domain architecture, RNase H type-2 spans 21–212 (GPVAGVDEVG…VRRVANGSGG (192 aa)). A divalent metal cation-binding residues include Asp-27, Glu-28, and Asp-121.

This sequence belongs to the RNase HII family. Requires Mn(2+) as cofactor. Mg(2+) serves as cofactor.

The protein localises to the cytoplasm. It catalyses the reaction Endonucleolytic cleavage to 5'-phosphomonoester.. Endonuclease that specifically degrades the RNA of RNA-DNA hybrids. The protein is Ribonuclease HII of Mycobacterium avium (strain 104).